A 523-amino-acid chain; its full sequence is Apolipoprotein N-acyltransferase (523 aa).

7 helical membrane passes run 26–46 (LRFA…AFAP), 49–66 (WWWL…LVRQ), 74–94 (AWVG…WLYI), 109–129 (AAVL…AWLW), 137–157 (QLSG…SEWL), 185–205 (LVGV…LCAA), and 212–232 (WLAG…HTIA). In terms of domain architecture, CN hydrolase spans 246-487 (LQGNVPQDVK…LGTLQADVQG (242 aa)). Glu-284 functions as the Proton acceptor in the catalytic mechanism. Residue Lys-345 is part of the active site. Cys-395 functions as the Nucleophile in the catalytic mechanism. Residues 494–514 (FVRTGNAPALGAGVLVLLAAL) form a helical membrane-spanning segment.

This sequence belongs to the CN hydrolase family. Apolipoprotein N-acyltransferase subfamily.

The protein resides in the cell inner membrane. The catalysed reaction is N-terminal S-1,2-diacyl-sn-glyceryl-L-cysteinyl-[lipoprotein] + a glycerophospholipid = N-acyl-S-1,2-diacyl-sn-glyceryl-L-cysteinyl-[lipoprotein] + a 2-acyl-sn-glycero-3-phospholipid + H(+). The protein operates within protein modification; lipoprotein biosynthesis (N-acyl transfer). Functionally, catalyzes the phospholipid dependent N-acylation of the N-terminal cysteine of apolipoprotein, the last step in lipoprotein maturation. This is Apolipoprotein N-acyltransferase from Ralstonia nicotianae (strain ATCC BAA-1114 / GMI1000) (Ralstonia solanacearum).